The sequence spans 140 residues: Transmembrane protein 107 (140 aa).

A run of 2 helical transmembrane segments spans residues Leu-7–Trp-27 and Leu-53–Ser-73. Asn-79 carries an N-linked (GlcNAc...) asparagine glycan. The next 2 helical transmembrane spans lie at Ser-83–Glu-103 and Ile-113–Phe-133.

In terms of assembly, part of the tectonic-like complex (also named B9 complex). Interacts with TMEM237, TMEM231, MKS1 and TMEM216.

Its subcellular location is the membrane. It localises to the cell projection. The protein resides in the cilium. Plays a role in cilia formation and embryonic patterning. Requires for normal Sonic hedgehog (Shh) signaling in the neural tube and acts in combination with GLI2 and GLI3 to pattern ventral and intermediate neuronal cell types. During ciliogenesis regulates the ciliary transition zone localization of some MKS complex proteins. The protein is Transmembrane protein 107 of Mus musculus (Mouse).